A 156-amino-acid chain; its full sequence is ATP synthase subunit b (156 aa).

Residues 11–31 (AIAFVLFVLFCMKYVWPPIMA) traverse the membrane as a helical segment.

The protein belongs to the ATPase B chain family. F-type ATPases have 2 components, F(1) - the catalytic core - and F(0) - the membrane proton channel. F(1) has five subunits: alpha(3), beta(3), gamma(1), delta(1), epsilon(1). F(0) has three main subunits: a(1), b(2) and c(10-14). The alpha and beta chains form an alternating ring which encloses part of the gamma chain. F(1) is attached to F(0) by a central stalk formed by the gamma and epsilon chains, while a peripheral stalk is formed by the delta and b chains.

It is found in the cell inner membrane. Functionally, f(1)F(0) ATP synthase produces ATP from ADP in the presence of a proton or sodium gradient. F-type ATPases consist of two structural domains, F(1) containing the extramembraneous catalytic core and F(0) containing the membrane proton channel, linked together by a central stalk and a peripheral stalk. During catalysis, ATP synthesis in the catalytic domain of F(1) is coupled via a rotary mechanism of the central stalk subunits to proton translocation. In terms of biological role, component of the F(0) channel, it forms part of the peripheral stalk, linking F(1) to F(0). In Proteus mirabilis (strain HI4320), this protein is ATP synthase subunit b.